A 444-amino-acid chain; its full sequence is Transcription factor PIF5 (444 aa).

Residues 26 to 39 (EDELVELLWRDGQV) are involved in interaction with phyB. 2 disordered regions span residues 154-265 (HCGS…NLSE) and 416-444 (MLGFGSPAGPQSQLSAPATTDSLHMGKIG). Polar residues predominate over residues 155-171 (CGSNQSTNIHQATTLPV). Basic and acidic residues predominate over residues 175 to 185 (DRSKNVEERLD). A compositionally biased stretch (low complexity) spans 187–197 (SSGGSSGCSYG). The span at 224-244 (ESVSQSDIGLTSTDDQTMGNK) shows a compositional bias: polar residues. Over residues 256–265 (RAAEVHNLSE) the composition is skewed to basic and acidic residues. The bHLH domain maps to 256–305 (RAAEVHNLSERRRRDRINERMKALQELIPHCSRTDKASILDEAIDYLKSL). Positions 424–437 (GPQSQLSAPATTDS) are enriched in polar residues. Serine 437 carries the phosphoserine modification.

As to quaternary structure, homodimer. Interacts specifically with the Pfr form of phytochrome B and with TOC1/APRR1. May form a heterodimer with PIF3. Interacts with PHYB, CRY1 and CRY2 in the nucleus in response to low blue light (LBL). Interacts with TOPP4. Associates to PTAC12/HMR/PAP5 which acts as a transcriptional coactivator. In terms of processing, phosphorylated. Additional phosphorylations induced within 60 seconds following phytochrome B photoactivation. Post-translationally, dephosphorylated by TOPP4 during photomorphogenesis, leading to subsequent degradation of PIF5 by the proteasomal pathway. As to expression, mainly expressed in leaves and seedlings, and, to a lower extent, in stems, fruits, flowers and roots.

The protein resides in the nucleus. Transcription factor acting negatively in the phytochrome B signaling pathway to promote the shade-avoidance response. Regulates PHYB abundance at the post-transcriptional level, possibly via the ubiquitin-proteasome pathway. Promotes ethylene activity in the dark. May regulate the expression of a subset of genes by binding to the G-box motif. Might be involved in the integration of light-signals to control both circadian and photomorphogenic processes. Activated by CRY1 and CRY2 in response to low blue light (LBL) by direct binding at chromatin on E-box variant 5'-CA[CT]GTG-3' to stimulate specific gene expression to adapt global physiology (e.g. hypocotyl elongation in low blue light). The protein is Transcription factor PIF5 of Arabidopsis thaliana (Mouse-ear cress).